Here is an 808-residue protein sequence, read N- to C-terminus: MPVADCESGLSPADVTGAGAANGNPGHWRSYYRHVLLLAYQSCGVVYGDLSTSPLYVYKSTFIIGSLRRFQDEEIVFGVFSLVFWTLTLIPLLKYVFIVLAADDNGEGGTFALYSLLVRHAKFSLMPNQEAADEELTSYYRPGYAPQETPILTALRRFLENHRKSRTFLLVTVLFGASLVIGDGVLTPPMSVLSSFSGLQVHSTALTSGEVEILSCTVLVCLFMVQHWGTHRVAFLFAPVVIVWLLLLGALGVYNIVVWNPRVLRALSPYYLVRFFQHTGKDGWISLGGILLSMTGTEAMYADLGHFTAASIRVAFVGLIYPCLVLQYMGQAAFLSKSPHCDIHFVFFESIPTGIFWPVLVIATLAAIVGSQAVISATFSIVRQCTALGCFPRVKIVHTSRRIHGQIYSPEINWILMLLCIAVTMGLRDTTLIGNAYGMACAGVMLVTTLLMALVIVFVWQYSCLVAALFLVAFGVVEAVYLSAALMKVPQGGWLPLVLSLVFVAVMYVWHYGTRRKHQFDVQNKVSLRWIHALGPSLGIVRVPGIGIIYSELATGVPAIFSHFVTNLPAFHQVLVFICVKAVPVPHVRDEERHLVGRIGPREFRMYRCVVRHGYKDVLAEDTDFENDLVLRIAEFVQMEADFDQRCSISDDGVVASVEVEGRMAVVPRPSDLARTGLLMREPGEEESVVARAAAAAKPESLIHSMHTMHEAESPGFASRRRVRFEVANQHTDPRVKEELSALVEAKHAGVAYIMGHSYIKARKSSSVFKKFAVNVAYAFLRKNCRGPGLVLNIPHISLIEVGMIYYV.

The Cytoplasmic portion of the chain corresponds to 1–34; sequence MPVADCESGLSPADVTGAGAANGNPGHWRSYYRH. The helical transmembrane segment at 35–55 threads the bilayer; sequence VLLLAYQSCGVVYGDLSTSPL. Topologically, residues 56–81 are extracellular; the sequence is YVYKSTFIIGSLRRFQDEEIVFGVFS. Residues 82–102 traverse the membrane as a helical segment; sequence LVFWTLTLIPLLKYVFIVLAA. Residues 103–167 are Cytoplasmic-facing; that stretch reads DDNGEGGTFA…FLENHRKSRT (65 aa). The chain crosses the membrane as a helical span at residues 168-188; sequence FLLVTVLFGASLVIGDGVLTP. At 189–204 the chain is on the extracellular side; that stretch reads PMSVLSSFSGLQVHST. A helical transmembrane segment spans residues 205-225; the sequence is ALTSGEVEILSCTVLVCLFMV. At 226-232 the chain is on the cytoplasmic side; it reads QHWGTHR. Residues 233–253 traverse the membrane as a helical segment; it reads VAFLFAPVVIVWLLLLGALGV. Residues 254–283 lie on the Extracellular side of the membrane; that stretch reads YNIVVWNPRVLRALSPYYLVRFFQHTGKDG. The helical transmembrane segment at 284–304 threads the bilayer; the sequence is WISLGGILLSMTGTEAMYADL. Residues 305–313 lie on the Cytoplasmic side of the membrane; it reads GHFTAASIR. Residues 314–334 traverse the membrane as a helical segment; the sequence is VAFVGLIYPCLVLQYMGQAAF. The Extracellular portion of the chain corresponds to 335-354; the sequence is LSKSPHCDIHFVFFESIPTG. Residues 355 to 375 traverse the membrane as a helical segment; that stretch reads IFWPVLVIATLAAIVGSQAVI. The Cytoplasmic portion of the chain corresponds to 376–406; it reads SATFSIVRQCTALGCFPRVKIVHTSRRIHGQ. A helical transmembrane segment spans residues 407–427; it reads IYSPEINWILMLLCIAVTMGL. The Extracellular portion of the chain corresponds to 428–439; sequence RDTTLIGNAYGM. Residues 440-460 traverse the membrane as a helical segment; that stretch reads ACAGVMLVTTLLMALVIVFVW. Residues 461–464 are Cytoplasmic-facing; the sequence is QYSC. A helical membrane pass occupies residues 465-485; it reads LVAALFLVAFGVVEAVYLSAA. Over 486–491 the chain is Extracellular; sequence LMKVPQ. The chain crosses the membrane as a helical span at residues 492–512; it reads GGWLPLVLSLVFVAVMYVWHY. Over 513–808 the chain is Cytoplasmic; the sequence is GTRRKHQFDV…LIEVGMIYYV (296 aa).

Belongs to the HAK/KUP transporter (TC 2.A.72.3) family.

The protein localises to the membrane. Its function is as follows. High-affinity potassium transporter. The protein is Probable potassium transporter 3 (HAK3) of Oryza sativa subsp. japonica (Rice).